A 764-amino-acid chain; its full sequence is Serine/threonine-protein kinase MPS1 (764 aa).

3 disordered regions span residues 66–95, 197–216, and 258–316; these read EEMD…SSHS, ELPL…RNTD, and QAAL…KSSI. The segment covering 85–95 has biased composition (low complexity); the sequence is TSGHTSTSSHS. The segment covering 201-216 has biased composition (basic and acidic residues); that stretch reads EDSHQTNFKETKRNTD. 2 stretches are compositionally biased toward low complexity: residues 272 to 292 and 306 to 315; these read KSRS…KDNS and STGSSSSKSS. The region spanning 440 to 720 is the Protein kinase domain; it reads YEKIELLGRG…LSSTFLQPFM (281 aa). ATP-binding positions include 446 to 454 and Lys468; that span reads LGRGGSSRV. Asp563 serves as the catalytic Proton acceptor.

The protein belongs to the protein kinase superfamily. Ser/Thr protein kinase family. Post-translationally, autophosphorylated.

It catalyses the reaction L-seryl-[protein] + ATP = O-phospho-L-seryl-[protein] + ADP + H(+). The enzyme catalyses L-threonyl-[protein] + ATP = O-phospho-L-threonyl-[protein] + ADP + H(+). The catalysed reaction is L-tyrosyl-[protein] + ATP = O-phospho-L-tyrosyl-[protein] + ADP + H(+). Its function is as follows. Involved in mitotic spindle assembly checkpoint signaling, a process that delays anaphase until chromosomes are bioriented on the spindle, and in the repair of incorrect mitotic kinetochore-spindle microtubule attachments. Phosphorylates SPC105 on MELT motifs; phosphorylation is required for recruitment of the BUB1-BUB3 complex to kinetochores. Phosphorylates CNN1, which contributes to the enrichment of CNN1 on anaphase kinetochores. Implicated in spindle pole body (SPD) duplication. Phosphorylates the SPC29 and SPC110 spindle pole body components. This chain is Serine/threonine-protein kinase MPS1 (MPS1), found in Saccharomyces cerevisiae (strain ATCC 204508 / S288c) (Baker's yeast).